The primary structure comprises 92 residues: Em-like protein GEA6 (92 aa).

2 stretches are compositionally biased toward basic and acidic residues: residues 1-18 (MASQQEKKQLDERAKKGE) and 37-51 (AEGRSRGGQTRKEQL). The interval 1-92 (MASQQEKKQL…IDESKFRTKT (92 aa)) is disordered.

It belongs to the small hydrophilic plant seed protein family. Present only in nearly dry and dry seeds.

In terms of biological role, it is thought to provide protection for the cytoplasm during the desiccation stage of embryo development. This is Em-like protein GEA6 (EM6) from Arabidopsis thaliana (Mouse-ear cress).